Reading from the N-terminus, the 89-residue chain is Small ribosomal subunit protein uS15 (89 aa).

Belongs to the universal ribosomal protein uS15 family. In terms of assembly, part of the 30S ribosomal subunit. Forms a bridge to the 50S subunit in the 70S ribosome, contacting the 23S rRNA.

In terms of biological role, one of the primary rRNA binding proteins, it binds directly to 16S rRNA where it helps nucleate assembly of the platform of the 30S subunit by binding and bridging several RNA helices of the 16S rRNA. Forms an intersubunit bridge (bridge B4) with the 23S rRNA of the 50S subunit in the ribosome. The polypeptide is Small ribosomal subunit protein uS15 (Bartonella bacilliformis (strain ATCC 35685 / KC583 / Herrer 020/F12,63)).